The following is a 197-amino-acid chain: Nucleoside triphosphate pyrophosphatase (197 aa).

Aspartate 72 serves as the catalytic Proton acceptor.

This sequence belongs to the Maf family. Requires a divalent metal cation as cofactor.

It is found in the cytoplasm. It catalyses the reaction a ribonucleoside 5'-triphosphate + H2O = a ribonucleoside 5'-phosphate + diphosphate + H(+). It carries out the reaction a 2'-deoxyribonucleoside 5'-triphosphate + H2O = a 2'-deoxyribonucleoside 5'-phosphate + diphosphate + H(+). Functionally, nucleoside triphosphate pyrophosphatase. May have a dual role in cell division arrest and in preventing the incorporation of modified nucleotides into cellular nucleic acids. This chain is Nucleoside triphosphate pyrophosphatase, found in Corynebacterium glutamicum (strain ATCC 13032 / DSM 20300 / JCM 1318 / BCRC 11384 / CCUG 27702 / LMG 3730 / NBRC 12168 / NCIMB 10025 / NRRL B-2784 / 534).